We begin with the raw amino-acid sequence, 2042 residues long: Cell adhesion molecule DSCAML1 (2042 aa).

A signal peptide spans 1–17 (MWLVTFFLLYSLRKAHT). Residues 18 to 1592 (EDVGTSLYFV…AQGEGDDVKK (1575 aa)) lie on the Extracellular side of the membrane. N-linked (GlcNAc...) asparagine glycosylation is found at Asn28 and Asn78. 9 Ig-like C2-type domains span residues 37-107 (SSTV…AENS), 114-216 (PNIR…ARLS), 227-311 (PTML…GTLT), 315-403 (PLRV…SIIT), 409-502 (PRIV…ARIN), 507-587 (PSIR…LSIS), 597-686 (PPLI…RQLI), 691-785 (PRFV…MFLT), and 789-886 (PAMI…LTVQ). 5 disulfides stabilise this stretch: Cys46–Cys102, Cys145–Cys197, Cys248–Cys295, Cys337–Cys387, and Cys430–Cys486. N-linked (GlcNAc...) asparagine glycosylation is found at Asn369, Asn472, Asn514, Asn557, Asn667, Asn711, Asn750, Asn797, and Asn810. 2 disulfide bridges follow: Cys527–Cys576 and Cys618–Cys670. An intrachain disulfide couples Cys712 to Cys768. The cysteines at positions 811 and 868 are disulfide-linked. Fibronectin type-III domains follow at residues 888-985 (PPDP…TEEA), 990-1089 (PPMD…TLED), 1094-1190 (PPEN…TKED), and 1194-1289 (PPAG…AGKA). N-linked (GlcNAc...) asparagine glycosylation is found at Asn927, Asn1083, Asn1145, Asn1163, Asn1276, and Asn1346. Residues 1279–1368 (EKVTIEPAGK…SGYYTCTATN (90 aa)) form the Ig-like C2-type 10 domain. A disulfide bridge connects residues Cys1312 and Cys1364. 2 consecutive Fibronectin type-III domains span residues 1384 to 1478 (PPDQ…THGR) and 1479 to 1579 (EPSF…TIPP). 3 N-linked (GlcNAc...) asparagine glycosylation sites follow: Asn1493, Asn1532, and Asn1562. The chain crosses the membrane as a helical span at residues 1593–1613 (LFTIACPIILATLGVALLFII). The Cytoplasmic segment spans residues 1614-2042 (RKKRKEKRLK…GAYSKSYTLV (429 aa)). 4 disordered regions span residues 1716–1742 (PLIDMSDIRPGTNPVSRKSVKSAHSTR), 1781–1805 (SDSYSASLSQDTDKGRNSMVSTESA), 1841–1865 (SSDQMTTGTTDNADSMTSMSTPSEP), and 1940–2042 (PPAR…YTLV). Residues 1733–1742 (KSVKSAHSTR) show a composition bias toward basic residues. 2 stretches are compositionally biased toward polar residues: residues 1781–1790 (SDSYSASLSQ) and 1841–1863 (SSDQMTTGTTDNADSMTSMSTPS). The span at 1951-1960 (AKPPGLPPPS) shows a compositional bias: pro residues. The span at 1961–1983 (SSSSSTTLPQRTLPMPTAASTAP) shows a compositional bias: low complexity. Residues 1984–1995 (APAPAPAAPAEP) are compositionally biased toward pro residues. 2 stretches are compositionally biased toward low complexity: residues 1996 to 2005 (PANTTTTTTT) and 2023 to 2034 (GAGRAQKQGAGA).

As to quaternary structure, homodimer; mediates homophilic interactions to promote cell adhesion. As to expression, SDK1, SDK2, DSCAM and DSCAML1 are expressed in non-overlapping subsets of interneurons and retinal ganglion cells (RGCs) that form synapses in distinct inner plexiform layer (IPL) sublaminae.

Its subcellular location is the cell membrane. It is found in the synapse. Cell adhesion molecule that plays a role in neuronal self-avoidance. Promotes repulsion between specific neuronal processes of either the same cell or the same subtype of cells. Adhesion molecule that promotes lamina-specific synaptic connections in the retina: expressed in specific subsets of interneurons and retinal ganglion cells (RGCs) and promotes synaptic connectivity via homophilic interactions. The chain is Cell adhesion molecule DSCAML1 (DSCAML1) from Gallus gallus (Chicken).